Here is a 154-residue protein sequence, read N- to C-terminus: MAAGSITSLPALPEDGGGAFPPGHFKDPKRLYCKNGGFFLRIHPDGRVDGVREKSDPHVKLQLQAEERGVVSIKGVCANRYLAMKEDGRLLASKCVTEECFFFERLESNNYNTYRSRKYSSWYVALKRTGQYKLGSKTGPGQKAILFLPMSAKS.

Residues 1–9 constitute a propeptide that is removed on maturation; that stretch reads MAAGSITSL. The segment at 1-20 is disordered; it reads MAAGSITSLPALPEDGGGAF. N35 provides a ligand contact to heparin. Residue Y81 is modified to Phosphotyrosine; by TEC. A Glycyl lysine isopeptide (Lys-Gly) (interchain with G-Cter in SUMO1) cross-link involves residue K94. A heparin-binding region spans residues 127-143; that stretch reads KRTGQYKLGSKTGPGQK.

Belongs to the heparin-binding growth factors family. Monomer. Homodimer. Interacts with FGFR1, FGFR2, FGFR3 and FGFR4. Affinity between fibroblast growth factors (FGFs) and their receptors is increased by heparan sulfate glycosaminoglycans that function as coreceptors. Interacts with CSPG4, FGFBP1 and TEC. Found in a complex with FGFBP1, FGF1 and FGF2. Interacts with FGFBP3. Interacts with integrin ITGAV:ITGB3; the interaction is required for FGF2 signaling. Interacts with SNORC (via the extracellular domain). Interacts with GPC3. Post-translationally, phosphorylation at Tyr-81 regulates FGF2 unconventional secretion. Found in all tissues examined.

It localises to the secreted. Its subcellular location is the nucleus. Its function is as follows. Acts as a ligand for FGFR1, FGFR2, FGFR3 and FGFR4. Also acts as an integrin ligand which is required for FGF2 signaling. Binds to integrin ITGAV:ITGB3. Plays an important role in the regulation of cell survival, cell division, cell differentiation and cell migration. Functions as a potent mitogen in vitro. Can induce angiogenesis. Mediates phosphorylation of ERK1/2 and thereby promotes retinal lens fiber differentiation. The protein is Fibroblast growth factor 2 (Fgf2) of Rattus norvegicus (Rat).